Reading from the N-terminus, the 308-residue chain is ABC transporter protein AbcA (308 aa).

An ABC transporter domain is found at 6–245 (LAVSGVNKSF…YHKLLHMEGD (240 aa)). 58–65 (GHNGAGKS) is an ATP binding site.

Belongs to the ABC transporter superfamily.

Influences the expression of the surface array protein gene (vapA). May have both regulatory and transport activities. This Aeromonas salmonicida protein is ABC transporter protein AbcA (abcA).